The primary structure comprises 411 residues: Argininosuccinate synthase (411 aa).

11–19 provides a ligand contact to ATP; sequence AYSGGLDTS. Residue Y88 participates in L-citrulline binding. G118 contacts ATP. Positions 120, 124, and 125 each coordinate L-aspartate. L-citrulline is bound at residue N124. 4 residues coordinate L-citrulline: R128, S176, E261, and Y273.

The protein belongs to the argininosuccinate synthase family. Type 1 subfamily. In terms of assembly, homotetramer.

Its subcellular location is the cytoplasm. The catalysed reaction is L-citrulline + L-aspartate + ATP = 2-(N(omega)-L-arginino)succinate + AMP + diphosphate + H(+). The protein operates within amino-acid biosynthesis; L-arginine biosynthesis; L-arginine from L-ornithine and carbamoyl phosphate: step 2/3. The protein is Argininosuccinate synthase of Lactiplantibacillus plantarum (strain ATCC BAA-793 / NCIMB 8826 / WCFS1) (Lactobacillus plantarum).